We begin with the raw amino-acid sequence, 293 residues long: Plant cysteine oxidase 1 (293 aa).

Fe cation is bound by residues H148, H150, and H211. The interval 250-293 (SEDDDVLSSEEEKEGYAWLQERDDNPEDHTNVVGALYRGPKVED) is disordered. The span at 251–262 (EDDDVLSSEEEK) shows a compositional bias: acidic residues. Over residues 269-279 (QERDDNPEDHT) the composition is skewed to basic and acidic residues.

This sequence belongs to the cysteine dioxygenase family. Requires Fe(2+) as cofactor.

Its subcellular location is the nucleus. The protein localises to the cytoplasm. It catalyses the reaction L-cysteine + O2 = 3-sulfino-L-alanine + H(+). Its function is as follows. Catalyzes the oxidation of N-terminal cysteine residues (N-Cys), thus preparing the protein for N-end rule pathway-mediated proteasomal degradation, upstream of the N-end rule enzymes ATE1, ATE2 and PRT6. Controls the preparation of the group VII ethylene response factor (ERF-VII) proteins for degradation via the 26S proteasome N-end rule pathway. Acts as an oxygen sensor that controls the stability of ERF-VII proteins, which are stabilized in flooding-induced hypoxia, and regulate transcriptional adaptation to these adverse conditions. Not active on Cys located inside or at the C-terminus of a peptide. Acts redundantly with PCO2 to repress the anaerobic response. This Arabidopsis thaliana (Mouse-ear cress) protein is Plant cysteine oxidase 1.